A 343-amino-acid chain; its full sequence is NADH-cytochrome b5 reductase 2 (343 aa).

The chain crosses the membrane as a helical span at residues 41–61 (ILLGAAAVGLAGAGAYFFSGA). Residues 92-197 (QGWLSLKLEE…KGPLPKYPWE (106 aa)) enclose the FAD-binding FR-type domain. 200-235 (KHKHIALVAGGTGITPMYQLIRAIFNNPDDKTKVTL) is an FAD binding site.

The protein belongs to the flavoprotein pyridine nucleotide cytochrome reductase family. FAD serves as cofactor.

Its subcellular location is the mitochondrion outer membrane. The catalysed reaction is 2 Fe(III)-[cytochrome b5] + NADH = 2 Fe(II)-[cytochrome b5] + NAD(+) + H(+). In terms of biological role, may mediate the reduction of outer membrane cytochrome b5. The polypeptide is NADH-cytochrome b5 reductase 2 (mcr-1) (Neurospora crassa (strain ATCC 24698 / 74-OR23-1A / CBS 708.71 / DSM 1257 / FGSC 987)).